Here is a 256-residue protein sequence, read N- to C-terminus: Ethylene-responsive transcription factor ERF084 (256 aa).

The segment at residues 115–172 is a DNA-binding region (AP2/ERF); it reads GFMGVRKRPWGRWSAEIRDRIGRCRHWLGTFDTAEEAARAYDAAARRLRGTKAKTNFV.

This sequence belongs to the AP2/ERF transcription factor family. ERF subfamily.

It is found in the nucleus. Its function is as follows. Probably acts as a transcriptional activator. Binds to the GCC-box pathogenesis-related promoter element. May be involved in the regulation of gene expression by stress factors and by components of stress signal transduction pathways. This Arabidopsis thaliana (Mouse-ear cress) protein is Ethylene-responsive transcription factor ERF084 (ERF084).